A 956-amino-acid polypeptide reads, in one-letter code: Glutamyl aminopeptidase (956 aa).

At 1 to 21 (MILEERSSWEGSKRYCIKTKH) the chain is on the cytoplasmic side. A helical; Signal-anchor for type II membrane protein transmembrane segment spans residues 22-42 (VAIICAVVVAVGLIVGLSVGL). Topologically, residues 43-956 (TRSCDSTEGM…IRNWFLDLNG (914 aa)) are extracellular. The disordered stretch occupies residues 48–87 (STEGMTQGTTQGTTQAPSHLPPVTSPPEDQGVCPASEDES). Residues 49–62 (TEGMTQGTTQGTTQ) are compositionally biased toward low complexity. N-linked (GlcNAc...) asparagine glycans are attached at residues Asn-126 and Asn-199. Glu-225 is a binding site for substrate. The N-linked (GlcNAc...) asparagine glycan is linked to Asn-326. 359–363 (GAMEN) is a substrate binding site. His-395 provides a ligand contact to Zn(2+). Catalysis depends on Glu-396, which acts as the Proton acceptor. Zn(2+) contacts are provided by His-399 and Glu-418. N-linked (GlcNAc...) asparagine glycans are attached at residues Asn-556, Asn-569, Asn-599, Asn-643, Asn-647, Asn-679, Asn-764, Asn-797, Asn-802, and Asn-829. Arg-888 lines the substrate pocket.

It belongs to the peptidase M1 family. Homodimer; disulfide-linked. Zn(2+) serves as cofactor.

The protein resides in the cell membrane. It catalyses the reaction Release of N-terminal glutamate (and to a lesser extent aspartate) from a peptide.. Substrate specificity is modulated by calcium which enhances the enzymatic activity for cleavage of acidic residues while reducing its activity with basic residues. Inhibited by aminopeptidase inhibitors amastatin and bestatin. Functionally, regulates central hypertension through its calcium-modulated preference to cleave N-terminal acidic residues from peptides such as angiotensin II. The polypeptide is Glutamyl aminopeptidase (ENPEP) (Bos taurus (Bovine)).